The primary structure comprises 302 residues: GTPase Era (302 aa).

In terms of domain architecture, Era-type G spans 4–171 (KAGFVALVGR…KEKIVSLLPE (168 aa)). Residues 12-19 (GRTNVGKS) are G1. Residue 12–19 (GRTNVGKS) participates in GTP binding. A G2 region spans residues 38-42 (QTTRN). Residues 59–62 (DTPG) form a G3 region. Residues 59 to 63 (DTPGI) and 121 to 124 (NKID) contribute to the GTP site. A G4 region spans residues 121–124 (NKID). The segment at 150–152 (ISA) is G5. One can recognise a KH type-2 domain in the interval 202–280 (LEEEVPHGVY…FLDLWVKTRK (79 aa)).

This sequence belongs to the TRAFAC class TrmE-Era-EngA-EngB-Septin-like GTPase superfamily. Era GTPase family. Monomer.

The protein localises to the cytoplasm. Its subcellular location is the cell membrane. Its function is as follows. An essential GTPase that binds both GDP and GTP, with rapid nucleotide exchange. Plays a role in 16S rRNA processing and 30S ribosomal subunit biogenesis and possibly also in cell cycle regulation and energy metabolism. The sequence is that of GTPase Era from Thermoanaerobacter pseudethanolicus (strain ATCC 33223 / 39E) (Clostridium thermohydrosulfuricum).